The sequence spans 496 residues: Glycerol kinase (496 aa).

Residue T12 coordinates ADP. The ATP site is built by T12, T13, and S14. T12 provides a ligand contact to sn-glycerol 3-phosphate. ADP is bound at residue R16. Sn-glycerol 3-phosphate is bound by residues R82, E83, and Y134. Glycerol contacts are provided by R82, E83, and Y134. Residue H230 is modified to Phosphohistidine; by HPr. A sn-glycerol 3-phosphate-binding site is contributed by D244. Positions 244 and 245 each coordinate glycerol. The ADP site is built by T266 and G309. ATP is bound by residues T266, G309, Q313, and G410. G410 and N414 together coordinate ADP.

Belongs to the FGGY kinase family. Homotetramer and homodimer (in equilibrium). In terms of processing, the phosphoenolpyruvate-dependent sugar phosphotransferase system (PTS), including enzyme I, and histidine-containing protein (HPr) are required for the phosphorylation, which leads to the activation of the enzyme.

It carries out the reaction glycerol + ATP = sn-glycerol 3-phosphate + ADP + H(+). The protein operates within polyol metabolism; glycerol degradation via glycerol kinase pathway; sn-glycerol 3-phosphate from glycerol: step 1/1. Its activity is regulated as follows. Activated by phosphorylation and inhibited by fructose 1,6-bisphosphate (FBP). In terms of biological role, key enzyme in the regulation of glycerol uptake and metabolism. Catalyzes the phosphorylation of glycerol to yield sn-glycerol 3-phosphate. The chain is Glycerol kinase from Bacillus anthracis (strain A0248).